Reading from the N-terminus, the 3620-residue chain is Cubilin (3620 aa).

A signal peptide spans methionine 1–glycine 20. A propeptide spans glutamate 21–arginine 32 (removed in mature form). Positions proline 39–glycine 46 are interaction with AMN. Asparagine 102 carries N-linked (GlcNAc...) asparagine glycosylation. The EGF-like 1 domain maps to aspartate 129–serine 165. 6 cysteine pairs are disulfide-bonded: cysteine 133–cysteine 144, cysteine 138–cysteine 153, cysteine 155–cysteine 164, cysteine 171–cysteine 187, cysteine 181–cysteine 196, and cysteine 198–cysteine 207. Residues aspartate 167–alanine 208 form the EGF-like 2; calcium-binding domain. Residue asparagine 253 is glycosylated (N-linked (GlcNAc...) asparagine). Residues aspartate 260 to glutamine 301 enclose the EGF-like 3; calcium-binding domain. 19 disulfide bridges follow: cysteine 264–cysteine 277, cysteine 271–cysteine 286, cysteine 289–cysteine 300, cysteine 306–cysteine 321, cysteine 313–cysteine 330, cysteine 333–cysteine 344, cysteine 350–cysteine 363, cysteine 357–cysteine 373, cysteine 396–cysteine 406, cysteine 401–cysteine 415, cysteine 417–cysteine 426, cysteine 433–cysteine 444, cysteine 438–cysteine 453, cysteine 455–cysteine 464, cysteine 471–cysteine 497, cysteine 524–cysteine 546, cysteine 587–cysteine 613, cysteine 640–cysteine 662, and cysteine 705–cysteine 730. The EGF-like 4; calcium-binding domain maps to aspartate 302 to threonine 345. EGF-like domains are found at residues valine 346 to asparagine 382 and leucine 392 to threonine 427. Asparagine 425 carries an N-linked (GlcNAc...) asparagine glycan. Residues asparagine 429–glutamine 465 form the EGF-like 7; calcium-binding domain. CUB domains are found at residues cysteine 471–glutamine 583, cysteine 587–serine 699, cysteine 705–alanine 812, cysteine 813–alanine 924, cysteine 928–threonine 1038, cysteine 1044–serine 1158, cysteine 1162–threonine 1274, cysteine 1275–histidine 1386, cysteine 1388–valine 1503, cysteine 1507–valine 1616, cysteine 1617–serine 1731, cysteine 1735–isoleucine 1847, and glycine 1849–valine 1960. 2 N-linked (GlcNAc...) asparagine glycosylation sites follow: asparagine 708 and asparagine 745. Cysteine 757 and cysteine 775 form a disulfide bridge. An N-linked (GlcNAc...) asparagine glycan is attached at asparagine 777. Cysteine 813 and cysteine 838 are joined by a disulfide. N-linked (GlcNAc...) asparagine glycosylation is present at asparagine 853. 2 cysteine pairs are disulfide-bonded: cysteine 865–cysteine 887 and cysteine 928–cysteine 954. Residue asparagine 953 is glycosylated (N-linked (GlcNAc...) asparagine). Glutamate 976 contacts Ca(2+). Asparagine 980 carries N-linked (GlcNAc...) asparagine glycosylation. Residues cysteine 981 and cysteine 1001 are joined by a disulfide bond. Aspartate 984, aspartate 1023, aspartate 1025, and leucine 1026 together coordinate Ca(2+). An intrachain disulfide couples cysteine 1044 to cysteine 1070. Positions 1092, 1102, and 1143 each coordinate Ca(2+). Cysteines 1099 and 1121 form a disulfide. An intrachain disulfide couples cysteine 1162 to cysteine 1188. A glycan (N-linked (GlcNAc...) asparagine) is linked at asparagine 1165. Glutamate 1210 provides a ligand contact to Ca(2+). An N-linked (GlcNAc...) asparagine glycan is attached at asparagine 1214. Cysteines 1215 and 1237 form a disulfide. Positions 1218, 1259, and 1262 each coordinate Ca(2+). Cysteine 1275 and cysteine 1303 are disulfide-bonded. Asparagine 1304 and asparagine 1316 each carry an N-linked (GlcNAc...) asparagine glycan. Glutamate 1325 serves as a coordination point for Ca(2+). Asparagine 1329 carries an N-linked (GlcNAc...) asparagine glycan. A disulfide bridge connects residues cysteine 1330 and cysteine 1348. Ca(2+)-binding residues include aspartate 1333, aspartate 1370, and valine 1372. Cystine bridges form between cysteine 1388–cysteine 1414 and cysteine 1441–cysteine 1463. An N-linked (GlcNAc...) asparagine glycan is attached at asparagine 1497. Cysteine 1507 and cysteine 1533 are disulfide-bonded. Asparagine 1548 is a glycosylation site (N-linked (GlcNAc...) asparagine). Intrachain disulfides connect cysteine 1560–cysteine 1578, cysteine 1617–cysteine 1644, cysteine 1672–cysteine 1694, cysteine 1735–cysteine 1761, and cysteine 1788–cysteine 1809. N-linked (GlcNAc...) asparagine glycosylation is present at asparagine 1643. N-linked (GlcNAc...) asparagine glycosylation is found at asparagine 1799, asparagine 1816, and asparagine 1882. Cysteines 1902 and 1924 form a disulfide. Asparagine 1961 carries an N-linked (GlcNAc...) asparagine glycan. Cystine bridges form between cysteine 1975/cysteine 2003 and cysteine 2029/cysteine 2051. CUB domains are found at residues cysteine 1975–serine 2088, cysteine 2089–lysine 2210, cysteine 2214–alanine 2331, cysteine 2333–serine 2445, cysteine 2449–serine 2562, cysteine 2567–threonine 2684, cysteine 2686–glutamine 2798, cysteine 2802–arginine 2916, cysteine 2917–threonine 3032, cysteine 3034–threonine 3147, cysteine 3154–valine 3271, cysteine 3275–cysteine 3392, cysteine 3392–serine 3504, and cysteine 3508–serine 3620. Asparagine 2082 and asparagine 2114 each carry an N-linked (GlcNAc...) asparagine glycan. 3 disulfide bridges follow: cysteine 2089–cysteine 2115, cysteine 2214–cysteine 2244, and cysteine 2272–cysteine 2294. The N-linked (GlcNAc...) asparagine glycan is linked to asparagine 2317. A disulfide bond links cysteine 2333 and cysteine 2360. Residues asparagine 2383 and asparagine 2397 are each glycosylated (N-linked (GlcNAc...) asparagine). 3 cysteine pairs are disulfide-bonded: cysteine 2387/cysteine 2408, cysteine 2449/cysteine 2475, and cysteine 2502/cysteine 2524. N-linked (GlcNAc...) asparagine glycosylation is found at asparagine 2528, asparagine 2578, asparagine 2589, and asparagine 2607. Cysteine 2567 and cysteine 2596 are joined by a disulfide. Intrachain disulfides connect cysteine 2625–cysteine 2646, cysteine 2686–cysteine 2712, cysteine 2739–cysteine 2761, cysteine 2802–cysteine 2828, cysteine 2857–cysteine 2880, cysteine 2917–cysteine 2943, and cysteine 2974–cysteine 2996. A glycan (N-linked (GlcNAc...) asparagine) is linked at asparagine 2810. N-linked (GlcNAc...) asparagine glycosylation is found at asparagine 2920, asparagine 2942, and asparagine 2986. Phosphothreonine is present on threonine 3005. 2 disulfide bridges follow: cysteine 3034-cysteine 3061 and cysteine 3088-cysteine 3110. Residues asparagine 3039, asparagine 3100, and asparagine 3122 are each glycosylated (N-linked (GlcNAc...) asparagine). 2 disulfide bridges follow: cysteine 3154-cysteine 3182 and cysteine 3212-cysteine 3234. 3 N-linked (GlcNAc...) asparagine glycosylation sites follow: asparagine 3265, asparagine 3280, and asparagine 3292. 2 disulfide bridges follow: cysteine 3275-cysteine 3303 and cysteine 3329-cysteine 3351. A glycan (N-linked (GlcNAc...) asparagine) is linked at asparagine 3354. An intrachain disulfide couples cysteine 3392 to cysteine 3418. N-linked (GlcNAc...) asparagine glycans are attached at residues asparagine 3427, asparagine 3454, and asparagine 3530. Disulfide bonds link cysteine 3445/cysteine 3467, cysteine 3508/cysteine 3534, and cysteine 3561/cysteine 3583.

As to quaternary structure, interacts with AMN. Component of the cubam complex composed of one CUBN trimer and one AMN chain. The cubam complex can dimerize. Interacts with LRP2 in a dual-receptor complex in a calcium-dependent manner. Found in a complex with PID1/PCLI1, LRP1 and CUBNI. Interacts with LRP1 and PID1/PCLI1. Post-translationally, the precursor is cleaved by a trans-Golgi proteinase furin, removing a propeptide. N-glycosylated. Detected in kidney cortex (at protein level). Detected in kidney, duodenum and jejunum.

The protein resides in the apical cell membrane. It localises to the cell membrane. Its subcellular location is the membrane. It is found in the coated pit. The protein localises to the endosome. The protein resides in the lysosome membrane. Its function is as follows. Endocytic receptor which plays a role in lipoprotein, vitamin and iron metabolism by facilitating their uptake. Acts together with LRP2 to mediate endocytosis of high-density lipoproteins, GC, hemoglobin, ALB, TF and SCGB1A1. Acts together with AMN to mediate endocytosis of the CBLIF-cobalamin complex. Binds to ALB, MB, Kappa and lambda-light chains, TF, hemoglobin, GC, SCGB1A1, APOA1, high density lipoprotein, and the CBLIF-cobalamin complex. Ligand binding requires calcium. Serves as important transporter in several absorptive epithelia, including intestine, renal proximal tubules and embryonic yolk sac. May play an important role in the development of the peri-implantation embryo through internalization of APOA1 and cholesterol. Binds to LGALS3 at the maternal-fetal interface. The sequence is that of Cubilin (CUBN) from Canis lupus familiaris (Dog).